Here is a 605-residue protein sequence, read N- to C-terminus: Elongation factor 4 (605 aa).

Positions 8 to 190 (RRVRNFCIVA…AIITRIPPPQ (183 aa)) constitute a tr-type G domain. Residues 20-25 (DHGKST) and 137-140 (NKID) contribute to the GTP site.

Belongs to the TRAFAC class translation factor GTPase superfamily. Classic translation factor GTPase family. LepA subfamily.

It is found in the cell inner membrane. It carries out the reaction GTP + H2O = GDP + phosphate + H(+). Functionally, required for accurate and efficient protein synthesis under certain stress conditions. May act as a fidelity factor of the translation reaction, by catalyzing a one-codon backward translocation of tRNAs on improperly translocated ribosomes. Back-translocation proceeds from a post-translocation (POST) complex to a pre-translocation (PRE) complex, thus giving elongation factor G a second chance to translocate the tRNAs correctly. Binds to ribosomes in a GTP-dependent manner. The polypeptide is Elongation factor 4 (Treponema pallidum (strain Nichols)).